The sequence spans 126 residues: Protein ApaG (126 aa).

Residues 2–126 enclose the ApaG domain; the sequence is SDTQHQVNVR…FRLAVPGALH (125 aa).

The protein is Protein ApaG of Pseudomonas aeruginosa (strain LESB58).